The chain runs to 215 residues: GTP-binding protein YPT6 (215 aa).

17–24 (GEQGVGKT) is a binding site for GTP. The Effector region signature appears at 39–47 (YQATIGIDF). GTP-binding positions include 65 to 69 (DTAGQ) and 124 to 127 (NKSD). The segment covering 178–196 (NSESTPLDSENANSANQNK) has biased composition (polar residues). The interval 178 to 215 (NSESTPLDSENANSANQNKPGVIDISTAEEQEQSACQC) is disordered. 2 S-geranylgeranyl cysteine lipidation sites follow: Cys-213 and Cys-215. The residue at position 215 (Cys-215) is a Cysteine methyl ester.

This sequence belongs to the small GTPase superfamily. Rab family. Interacts with YIF1, YIP3 and YIP4.

It localises to the cell membrane. Its function is as follows. Protein transport. Might participate in post-Golgi transport. In Saccharomyces cerevisiae (strain ATCC 204508 / S288c) (Baker's yeast), this protein is GTP-binding protein YPT6 (YPT6).